A 343-amino-acid polypeptide reads, in one-letter code: N-acetyl-gamma-glutamyl-phosphate reductase (343 aa).

Cys146 is an active-site residue.

This sequence belongs to the NAGSA dehydrogenase family. Type 1 subfamily.

The protein localises to the cytoplasm. The catalysed reaction is N-acetyl-L-glutamate 5-semialdehyde + phosphate + NADP(+) = N-acetyl-L-glutamyl 5-phosphate + NADPH + H(+). Its pathway is amino-acid biosynthesis; L-arginine biosynthesis; N(2)-acetyl-L-ornithine from L-glutamate: step 3/4. Functionally, catalyzes the NADPH-dependent reduction of N-acetyl-5-glutamyl phosphate to yield N-acetyl-L-glutamate 5-semialdehyde. The chain is N-acetyl-gamma-glutamyl-phosphate reductase from Paenarthrobacter aurescens (strain TC1).